Consider the following 133-residue polypeptide: Small ribosomal subunit protein bS16 (133 aa).

Positions 99–133 (EKWQQNQTERRQKRLAVKTRRRQAKKAAEAKGAEA) are disordered. Over residues 109 to 123 (RQKRLAVKTRRRQAK) the composition is skewed to basic residues. A compositionally biased stretch (basic and acidic residues) spans 124-133 (KAAEAKGAEA).

Belongs to the bacterial ribosomal protein bS16 family.

This is Small ribosomal subunit protein bS16 from Chlorobium limicola (strain DSM 245 / NBRC 103803 / 6330).